The following is a 461-amino-acid chain: Tumor necrosis factor receptor superfamily member 1A (461 aa).

Residues M1–G29 form the signal peptide. Residues L30 to A211 are Extracellular-facing. 4 TNFR-Cys repeats span residues L43–E82, V83–C125, G126–C166, and N167–L196. 12 cysteine pairs are disulfide-bonded: C44–C58, C59–C72, C62–C81, C84–C99, C102–C117, C105–C125, C127–C143, C146–C158, C149–C166, C168–C179, C182–C195, and C185–C191. Residue N54 is glycosylated (N-linked (GlcNAc...) asparagine). Residue N151 is glycosylated (N-linked (GlcNAc...) asparagine). Residue N201 is glycosylated (N-linked (GlcNAc...) asparagine). A helical membrane pass occupies residues V212 to C234. The Cytoplasmic portion of the chain corresponds to R235–R461. Residues V344–Q354 are N-SMase activation domain (NSD). The region spanning P363–L448 is the Death domain.

Binding of TNF to the extracellular domain leads to homotrimerization. The aggregated death domains provide a novel molecular interface that interacts specifically with the death domain of TRADD. Various TRADD-interacting proteins such as TRAFS, RIPK1 and possibly FADD, are recruited to the complex by their association with TRADD. This complex activates at least two distinct signaling cascades, apoptosis and NF-kappa-B signaling. Interacts with BAG4, BABAM2, FEM1B, GRB2, SQSTM1 and TRPC4AP. Interacts with DAB2IP. Interacts directly with NOL3 (via CARD domain); inhibits TNF-signaling pathway. Interacts with SH3RF2, TRADD and RIPK1. SH3RF2 facilitates the recruitment of RIPK1 and TRADD to TNFRSF1A in a TNF-alpha-dependent process. Interacts with PGLYRP1; this interaction is important for cell death induction. Interacts (via death domain) with MADD (via death domain).

Its subcellular location is the cell membrane. The protein localises to the golgi apparatus membrane. Receptor for TNFSF2/TNF-alpha and homotrimeric TNFSF1/lymphotoxin-alpha. The adapter molecule FADD recruits caspase-8 to the activated receptor. The resulting death-inducing signaling complex (DISC) performs caspase-8 proteolytic activation which initiates the subsequent cascade of caspases (aspartate-specific cysteine proteases) mediating apoptosis. The chain is Tumor necrosis factor receptor superfamily member 1A (Tnfrsf1a) from Rattus norvegicus (Rat).